Reading from the N-terminus, the 387-residue chain is MIEDHLNTELAEIASAGLTRRRRVLETPCGRMATVDGTNLLNFASNDYLGLAGNADIARVLADGALQWGAGSGASHLVSGHLGPHELLEKEIAEFTGFPRTLTFSTGYLANLAVTPTLAGRGDAVFADKLNHASLIDAMQLAKANGAEVQRYPHNDVAALEKMLAASTAAHKIIVTDAVFSMDGDLAPLPLIFALAERYDAWLVIDDAHGFGVLGPHGEGSLGHFNLPASPRILLMGTLGKAAGVGGAFVAGSETAIEYLLQKGRSYIFTTAQPPAIACALAKSLQLIRDGDALRANLMDRIGQLRDGLAGLPMKLLPSPTAIQPLIVGDNDAAVALSKALWERGLWVPAIRPPTVPKGTARLRISVSAAHTEADIAQLIAALKELA.

Arginine 20 contributes to the substrate binding site. 107 to 108 (GY) contacts pyridoxal 5'-phosphate. A substrate-binding site is contributed by histidine 132. Residues serine 181, histidine 209, and threonine 238 each contribute to the pyridoxal 5'-phosphate site. Lysine 241 carries the post-translational modification N6-(pyridoxal phosphate)lysine. Threonine 355 provides a ligand contact to substrate.

The protein belongs to the class-II pyridoxal-phosphate-dependent aminotransferase family. BioF subfamily. Homodimer. Pyridoxal 5'-phosphate is required as a cofactor.

The catalysed reaction is 6-carboxyhexanoyl-[ACP] + L-alanine + H(+) = (8S)-8-amino-7-oxononanoate + holo-[ACP] + CO2. The protein operates within cofactor biosynthesis; biotin biosynthesis. In terms of biological role, catalyzes the decarboxylative condensation of pimeloyl-[acyl-carrier protein] and L-alanine to produce 8-amino-7-oxononanoate (AON), [acyl-carrier protein], and carbon dioxide. This is 8-amino-7-oxononanoate synthase from Dechloromonas aromatica (strain RCB).